The sequence spans 1241 residues: Sterol 3-beta-glucosyltransferase (1241 aa).

Positions 1–11 (MSGIESTEEPC) are enriched in acidic residues. Disordered stretches follow at residues 1–97 (MSGI…KPSI) and 124–189 (DQQV…TLRK). Residues 25-34 (PEERQTRKDS) are compositionally biased toward basic and acidic residues. Over residues 136 to 155 (ESEDQQADESSDEQEDDDQD) the composition is skewed to acidic residues. Residues 220-267 (NKLKRTFDISDTDVFISDYPCWLMGDVLLQGHLYITKHHILFFAFLPK) enclose the GRAM 1 domain. In terms of domain architecture, PH spans 271 to 373 (SISKSGALTT…WVSSLKKHIF (103 aa)). A disordered region spans residues 499–556 (DDFSQEQESAESSKPVSDDEIVSADDNQELEEKQPQDNLANAEKENHDKVSRANSRRT). Acidic residues predominate over residues 516-527 (DDEIVSADDNQE). Positions 540-549 (AEKENHDKVS) are enriched in basic and acidic residues. The GRAM 2 domain occupies 609–675 (ERFRKHFSLT…SDIENVNKEK (67 aa)). A disordered region spans residues 720–741 (KGSTDSSPPNASEGSSDESCNL). Residues 723 to 741 (TDSSPPNASEGSSDESCNL) are compositionally biased toward polar residues. The UDP-alpha-D-glucose site is built by S797, R798, D800, N1071, V1098, H1100, H1113, S1116, G1117, T1118, D1137, and Q1138.

This sequence belongs to the glycosyltransferase 28 family.

Its subcellular location is the cytoplasm. It is found in the preautophagosomal structure membrane. It carries out the reaction a sterol + UDP-alpha-D-glucose = a sterol 3-beta-D-glucoside + UDP + H(+). The catalysed reaction is ergosterol + UDP-alpha-D-glucose = ergosteryl 3-beta-D-glucoside + UDP + H(+). Its function is as follows. Sterol glycosyltransferase responsible for the glycosylation of ergosterol to form ergosterol-glucoside. Mediates autophagic degradation of peroxisomes (pexophagy). The chain is Sterol 3-beta-glucosyltransferase from Pichia angusta (Yeast).